The sequence spans 313 residues: Small ribosomal subunit protein uS2 (313 aa).

The segment covering 234-243 (DEEAKEEKTK) has biased composition (basic and acidic residues). The segment at 234–313 (DEEAKEEKTK…ASKAEAEEGK (80 aa)) is disordered. The span at 244–256 (AKTTAKKVVTKKA) shows a compositional bias: basic residues. Basic and acidic residues predominate over residues 266–297 (AEKKSEKPTTEKRPTKEAAETKETSEEPKTKE).

This sequence belongs to the universal ribosomal protein uS2 family.

In Coxiella burnetii (strain Dugway 5J108-111), this protein is Small ribosomal subunit protein uS2.